Reading from the N-terminus, the 62-residue chain is Large ribosomal subunit protein bL35 (62 aa).

Over residues 1 to 26 (MPKMKTKSGLKKRIKITATGKVKRGN) the composition is skewed to basic residues. Residues 1–62 (MPKMKTKSGL…SDFKRYKELI (62 aa)) form a disordered region. Residues 53 to 62 (SDFKRYKELI) show a composition bias toward basic and acidic residues.

The protein belongs to the bacterial ribosomal protein bL35 family.

The sequence is that of Large ribosomal subunit protein bL35 from Metamycoplasma arthritidis (strain 158L3-1) (Mycoplasma arthritidis).